Here is an 808-residue protein sequence, read N- to C-terminus: MAHYLMHGTLHATVYEVDKLHSGGISGFFGKILANVEGTIGIGKGVTQLYATIDLERARVGRTRIIKDEPNNPKWYESFHIYCAHMASNVVFTVKDDNPIGATLIGRAYVPVEELIRGDQVDRWVEILDEDKNPIEGDSKIHVKLQFFDVKKDSNWNMGIKGARYLGVPYTFYSQRRGCRVSLYQDAHVPDGFIPKIPLAGGKYYEPHRCWEDVFDAITNARHLIYITGWSVYTEITLIRDSRRPKPGGDVTLGELLKQKASEGVKVLMLVWDDRTSVGLLKKDGLMATHDEETANYFQNTDVHCVLCPRNPDDGGSFVQGLQISTMFTHHQKIVVVDGEMPSGESQMRRIVSFVGGIDLCDGRYDTPFHSLFRTLDTAHHDDFHQPNFAGSSITKGGPREPWHDIHSRLEGPVAWDVLFNFEQRWRQQGGKDVLVNLRELDNIIIPPSPVMFPDDHETWNVQLFRSIDGGAAFGFPETPEEAARAGLVSGKDNIIDRSIQDAYINAIRRAKNFIYIENQYFLGSSFDWSSDDIKREDINALHLIPKELSLKIVSKIERGERFTVYVVVPMWPEGVPESASVQAILDWQRRTMEMMYKDIIQALRAKDREEDPRNYLTFFCLGNREVKKSGEYEPSERPEDDSDYIRAQEARRFMIYVHTKMMIVDDEYIIVGSANINQRSMDGARDSEIAMGAYQPYHLTINQPARGQIHGFRMALWYEHLGMLDDTFLEPENIECVQKVNRVAGKYWDLYASELLEHDLPGHLLRYPIGVSSEGDVTELPGTEFFPDTKARVLGAKSDYLPPILTT.

Residues 1–125 (MAHYLMHGTL…IRGDQVDRWV (125 aa)) form the C2 domain. D186 is a binding site for Ca(2+). Residues 326–364 (TMFTHHQKIVVVDGEMPSGESQMRRIVSFVGGIDLCDGR) enclose the PLD phosphodiesterase 1 domain. Residues H331, K333, and D338 contribute to the active site. Residue H331 participates in a 1,2-diacyl-sn-glycero-3-phosphate binding. 2 residues coordinate Ca(2+): H370 and H404. Positions 520 and 659 each coordinate a 1,2-diacyl-sn-glycero-3-phosphate. The 28-residue stretch at 654–681 (FMIYVHTKMMIVDDEYIIVGSANINQRS) folds into the PLD phosphodiesterase 2 domain. Catalysis depends on residues H659, K661, and D666. E720 lines the Ca(2+) pocket.

Belongs to the phospholipase D family. C2-PLD subfamily. It depends on Ca(2+) as a cofactor.

It catalyses the reaction a 1,2-diacyl-sn-glycero-3-phosphocholine + H2O = a 1,2-diacyl-sn-glycero-3-phosphate + choline + H(+). In terms of biological role, hydrolyzes glycerol-phospholipids at the terminal phosphodiesteric bond. Plays an important role in various cellular processes. In Carica papaya (Papaya), this protein is Phospholipase D alpha 1.